The primary structure comprises 467 residues: 3-isopropylmalate dehydratase large subunit (467 aa).

3 residues coordinate [4Fe-4S] cluster: C349, C409, and C412. Residues 422–443 (PGQRSASTSNRNFEGRQGRGGR) are disordered.

Belongs to the aconitase/IPM isomerase family. LeuC type 1 subfamily. In terms of assembly, heterodimer of LeuC and LeuD. [4Fe-4S] cluster serves as cofactor.

The catalysed reaction is (2R,3S)-3-isopropylmalate = (2S)-2-isopropylmalate. It functions in the pathway amino-acid biosynthesis; L-leucine biosynthesis; L-leucine from 3-methyl-2-oxobutanoate: step 2/4. Its function is as follows. Catalyzes the isomerization between 2-isopropylmalate and 3-isopropylmalate, via the formation of 2-isopropylmaleate. In Paramagnetospirillum magneticum (strain ATCC 700264 / AMB-1) (Magnetospirillum magneticum), this protein is 3-isopropylmalate dehydratase large subunit.